Reading from the N-terminus, the 288-residue chain is Pantothenate synthetase (288 aa).

27-34 (MGALHEGH) is an ATP binding site. Catalysis depends on His34, which acts as the Proton donor. (R)-pantoate is bound by residues Gln58 and Gln150. Gln58 lines the beta-alanine pocket. ATP is bound by residues Leu173 and 181-184 (YSSR).

Belongs to the pantothenate synthetase family. As to quaternary structure, homodimer.

Its subcellular location is the cytoplasm. The enzyme catalyses (R)-pantoate + beta-alanine + ATP = (R)-pantothenate + AMP + diphosphate + H(+). The protein operates within cofactor biosynthesis; (R)-pantothenate biosynthesis; (R)-pantothenate from (R)-pantoate and beta-alanine: step 1/1. Functionally, catalyzes the condensation of pantoate with beta-alanine in an ATP-dependent reaction via a pantoyl-adenylate intermediate. The sequence is that of Pantothenate synthetase from Tropheryma whipplei (strain TW08/27) (Whipple's bacillus).